Reading from the N-terminus, the 78-residue chain is Large ribosomal subunit protein uL24 (78 aa).

Belongs to the universal ribosomal protein uL24 family. As to quaternary structure, part of the 50S ribosomal subunit.

One of two assembly initiator proteins, it binds directly to the 5'-end of the 23S rRNA, where it nucleates assembly of the 50S subunit. In terms of biological role, one of the proteins that surrounds the polypeptide exit tunnel on the outside of the subunit. The sequence is that of Large ribosomal subunit protein uL24 from Campylobacter curvus (strain 525.92).